We begin with the raw amino-acid sequence, 365 residues long: Probable caffeine synthase 4 (365 aa).

Tyr18 is an S-adenosyl-L-homocysteine binding site. Thr25 lines the caffeine pocket. The S-adenosyl-L-homocysteine site is built by Cys61, Asn66, Asp98, Leu99, Ser134, and Phe135. Tyr152, His155, and Trp156 together coordinate caffeine. The Mg(2+) site is built by Asn173, Asp259, Phe261, and Asn262. Phe317 is a binding site for caffeine.

This sequence belongs to the methyltransferase superfamily. Type-7 methyltransferase family. It depends on Mg(2+) as a cofactor.

Its pathway is alkaloid biosynthesis. May be involved in the biosynthesis of caffeine. This chain is Probable caffeine synthase 4, found in Camellia sinensis (Tea plant).